Reading from the N-terminus, the 299-residue chain is ATP phosphoribosyltransferase (299 aa).

The protein belongs to the ATP phosphoribosyltransferase family. Long subfamily. The cofactor is Mg(2+).

The protein localises to the cytoplasm. It catalyses the reaction 1-(5-phospho-beta-D-ribosyl)-ATP + diphosphate = 5-phospho-alpha-D-ribose 1-diphosphate + ATP. It functions in the pathway amino-acid biosynthesis; L-histidine biosynthesis; L-histidine from 5-phospho-alpha-D-ribose 1-diphosphate: step 1/9. Feedback inhibited by histidine. Catalyzes the condensation of ATP and 5-phosphoribose 1-diphosphate to form N'-(5'-phosphoribosyl)-ATP (PR-ATP). Has a crucial role in the pathway because the rate of histidine biosynthesis seems to be controlled primarily by regulation of HisG enzymatic activity. The sequence is that of ATP phosphoribosyltransferase from Campylobacter jejuni subsp. jejuni serotype O:23/36 (strain 81-176).